The following is a 296-amino-acid chain: NAD kinase (296 aa).

Catalysis depends on D72, which acts as the Proton acceptor. NAD(+) is bound by residues 72-73 (DG), 146-147 (ND), R157, K174, D176, 187-192 (TAYALS), and Q247.

This sequence belongs to the NAD kinase family. A divalent metal cation is required as a cofactor.

Its subcellular location is the cytoplasm. The catalysed reaction is NAD(+) + ATP = ADP + NADP(+) + H(+). Its function is as follows. Involved in the regulation of the intracellular balance of NAD and NADP, and is a key enzyme in the biosynthesis of NADP. Catalyzes specifically the phosphorylation on 2'-hydroxyl of the adenosine moiety of NAD to yield NADP. In Pseudomonas fluorescens (strain Pf0-1), this protein is NAD kinase.